The sequence spans 256 residues: uncharacterized protein (256 aa).

2 consecutive transmembrane segments (helical) span residues 181–201 (CCII…ASMV) and 231–251 (GIAV…GLIA).

The protein localises to the cell membrane. This is an uncharacterized protein from Methanocaldococcus jannaschii (strain ATCC 43067 / DSM 2661 / JAL-1 / JCM 10045 / NBRC 100440) (Methanococcus jannaschii).